The sequence spans 520 residues: 2-isopropylmalate synthase (520 aa).

The 263-residue stretch at 12–274 folds into the Pyruvate carboxyltransferase domain; sequence VVIFDTTLRD…WCNVESTMLT (263 aa). Mn(2+) is bound by residues Asp-21, His-209, His-211, and Asn-245. The regulatory domain stretch occupies residues 398–520; sequence KLTSLTVIAG…RDVPSAAAAS (123 aa).

This sequence belongs to the alpha-IPM synthase/homocitrate synthase family. LeuA type 1 subfamily. Homodimer. It depends on Mn(2+) as a cofactor.

It localises to the cytoplasm. The catalysed reaction is 3-methyl-2-oxobutanoate + acetyl-CoA + H2O = (2S)-2-isopropylmalate + CoA + H(+). The protein operates within amino-acid biosynthesis; L-leucine biosynthesis; L-leucine from 3-methyl-2-oxobutanoate: step 1/4. Catalyzes the condensation of the acetyl group of acetyl-CoA with 3-methyl-2-oxobutanoate (2-ketoisovalerate) to form 3-carboxy-3-hydroxy-4-methylpentanoate (2-isopropylmalate). This is 2-isopropylmalate synthase from Nitrobacter hamburgensis (strain DSM 10229 / NCIMB 13809 / X14).